The following is a 381-amino-acid chain: Alkanesulfonate monooxygenase (381 aa).

It belongs to the SsuD family. In terms of assembly, homotetramer.

The catalysed reaction is an alkanesulfonate + FMNH2 + O2 = an aldehyde + FMN + sulfite + H2O + 2 H(+). Its function is as follows. Catalyzes the desulfonation of aliphatic sulfonates. This Citrobacter koseri (strain ATCC BAA-895 / CDC 4225-83 / SGSC4696) protein is Alkanesulfonate monooxygenase.